The chain runs to 232 residues: Large ribosomal subunit protein uL1 (232 aa).

The protein belongs to the universal ribosomal protein uL1 family. Part of the 50S ribosomal subunit.

Binds directly to 23S rRNA. The L1 stalk is quite mobile in the ribosome, and is involved in E site tRNA release. Its function is as follows. Protein L1 is also a translational repressor protein, it controls the translation of the L11 operon by binding to its mRNA. The sequence is that of Large ribosomal subunit protein uL1 from Aliarcobacter butzleri (strain RM4018) (Arcobacter butzleri).